The chain runs to 714 residues: Fatty acid oxidation complex subunit alpha (714 aa).

The interval 1–190 (MEMASAFTLN…KLGLVDDVVP (190 aa)) is enoyl-CoA hydratase. The 3-hydroxyacyl-CoA dehydrogenase stretch occupies residues 306–714 (APLNSVGILG…FWKTTATDLQ (409 aa)).

This sequence in the N-terminal section; belongs to the enoyl-CoA hydratase/isomerase family. In the central section; belongs to the 3-hydroxyacyl-CoA dehydrogenase family. In terms of assembly, heterotetramer of two alpha chains (FadJ) and two beta chains (FadI).

The protein localises to the cytoplasm. It catalyses the reaction a (3S)-3-hydroxyacyl-CoA = a (2E)-enoyl-CoA + H2O. The enzyme catalyses a 4-saturated-(3S)-3-hydroxyacyl-CoA = a (3E)-enoyl-CoA + H2O. It carries out the reaction a (3S)-3-hydroxyacyl-CoA + NAD(+) = a 3-oxoacyl-CoA + NADH + H(+). The catalysed reaction is (3S)-3-hydroxybutanoyl-CoA = (3R)-3-hydroxybutanoyl-CoA. The protein operates within lipid metabolism; fatty acid beta-oxidation. Catalyzes the formation of a hydroxyacyl-CoA by addition of water on enoyl-CoA. Also exhibits 3-hydroxyacyl-CoA epimerase and 3-hydroxyacyl-CoA dehydrogenase activities. This chain is Fatty acid oxidation complex subunit alpha, found in Escherichia coli O81 (strain ED1a).